The sequence spans 404 residues: Cysteine desulfurase IscS (404 aa).

Residues 75–76, asparagine 155, glutamine 183, and 203–205 each bind pyridoxal 5'-phosphate; these read AT and SGH. Lysine 206 carries the N6-(pyridoxal phosphate)lysine modification. Threonine 243 contributes to the pyridoxal 5'-phosphate binding site. The active-site Cysteine persulfide intermediate is the cysteine 328. Cysteine 328 is a binding site for [2Fe-2S] cluster.

Belongs to the class-V pyridoxal-phosphate-dependent aminotransferase family. NifS/IscS subfamily. As to quaternary structure, homodimer. Forms a heterotetramer with IscU, interacts with other sulfur acceptors. It depends on pyridoxal 5'-phosphate as a cofactor.

It localises to the cytoplasm. It carries out the reaction (sulfur carrier)-H + L-cysteine = (sulfur carrier)-SH + L-alanine. It functions in the pathway cofactor biosynthesis; iron-sulfur cluster biosynthesis. Its function is as follows. Master enzyme that delivers sulfur to a number of partners involved in Fe-S cluster assembly, tRNA modification or cofactor biosynthesis. Catalyzes the removal of elemental sulfur atoms from cysteine to produce alanine. Functions as a sulfur delivery protein for Fe-S cluster synthesis onto IscU, an Fe-S scaffold assembly protein, as well as other S acceptor proteins. This is Cysteine desulfurase IscS from Shewanella amazonensis (strain ATCC BAA-1098 / SB2B).